The sequence spans 245 residues: MYPVDLHMHTVASTHAYSTLSDYIAQAKQKGIKLFAITDHGPDMEDAPHHWHFINMRIWPRVVDGVGILRGIEANIKNVDGEIDCSGKMFDSLDLIIAGFHEPVFAPHDKATNTKSMIATIASGNVHIISHPGNPRYPIDFKAVAEAAAKHQVALEINNSSFLHSRKGSEDNCRAVAAAVRDAGGWVALGSDSHTAFTMGEFEECLKILDAVDFPPERILNVSPRRLLNFLESRGMAPIAEFADL.

The Zn(2+) site is built by H7, H9, H15, H40, E73, H101, H131, D192, and H194.

It belongs to the PHP family. In terms of assembly, homotrimer. Zn(2+) is required as a cofactor.

This Escherichia coli O81 (strain ED1a) protein is Probable phosphatase YcdX.